We begin with the raw amino-acid sequence, 583 residues long: 2-succinyl-5-enolpyruvyl-6-hydroxy-3-cyclohexene-1-carboxylate synthase (583 aa).

The protein belongs to the TPP enzyme family. MenD subfamily. Homodimer. Requires Mg(2+) as cofactor. It depends on Mn(2+) as a cofactor. Thiamine diphosphate serves as cofactor.

It catalyses the reaction isochorismate + 2-oxoglutarate + H(+) = 5-enolpyruvoyl-6-hydroxy-2-succinyl-cyclohex-3-ene-1-carboxylate + CO2. It participates in quinol/quinone metabolism; 1,4-dihydroxy-2-naphthoate biosynthesis; 1,4-dihydroxy-2-naphthoate from chorismate: step 2/7. The protein operates within quinol/quinone metabolism; menaquinone biosynthesis. In terms of biological role, catalyzes the thiamine diphosphate-dependent decarboxylation of 2-oxoglutarate and the subsequent addition of the resulting succinic semialdehyde-thiamine pyrophosphate anion to isochorismate to yield 2-succinyl-5-enolpyruvyl-6-hydroxy-3-cyclohexene-1-carboxylate (SEPHCHC). The polypeptide is 2-succinyl-5-enolpyruvyl-6-hydroxy-3-cyclohexene-1-carboxylate synthase (Chlorobaculum parvum (strain DSM 263 / NCIMB 8327) (Chlorobium vibrioforme subsp. thiosulfatophilum)).